The sequence spans 325 residues: NADH-quinone oxidoreductase subunit H (325 aa).

Helical transmembrane passes span 11–31 (ILLT…CGAF), 81–101 (VIFT…FAIV), 114–134 (IGIL…LFAG), 154–174 (LSYE…AGSF), 186–206 (VWNV…GVAV), 237–257 (FFVG…TLFF), 265–285 (LPPF…FILI), and 304–324 (ICLP…LWQA).

It belongs to the complex I subunit 1 family. In terms of assembly, NDH-1 is composed of 13 different subunits. Subunits NuoA, H, J, K, L, M, N constitute the membrane sector of the complex.

It is found in the cell inner membrane. It catalyses the reaction a quinone + NADH + 5 H(+)(in) = a quinol + NAD(+) + 4 H(+)(out). Its function is as follows. NDH-1 shuttles electrons from NADH, via FMN and iron-sulfur (Fe-S) centers, to quinones in the respiratory chain. The immediate electron acceptor for the enzyme in this species is believed to be ubiquinone. Couples the redox reaction to proton translocation (for every two electrons transferred, four hydrogen ions are translocated across the cytoplasmic membrane), and thus conserves the redox energy in a proton gradient. This subunit may bind ubiquinone. The polypeptide is NADH-quinone oxidoreductase subunit H (Escherichia fergusonii (strain ATCC 35469 / DSM 13698 / CCUG 18766 / IAM 14443 / JCM 21226 / LMG 7866 / NBRC 102419 / NCTC 12128 / CDC 0568-73)).